Consider the following 308-residue polypeptide: Beta-1,3-galactosyltransferase 5 (308 aa).

Over 1 to 7 (MAHMKTR) the chain is Cytoplasmic. The chain crosses the membrane as a helical; Signal-anchor for type II membrane protein span at residues 8 to 25 (LVYASILMMGALCLYFSM). At 26-308 (DSFRELPFVF…NSKEQDCPAV (283 aa)) the chain is on the lumenal side. Residues asparagine 128, asparagine 172, and asparagine 229 are each glycosylated (N-linked (GlcNAc...) asparagine).

It belongs to the glycosyltransferase 31 family. In terms of tissue distribution, expressed in brain and kidney.

It localises to the golgi apparatus membrane. The catalysed reaction is a globoside Gb4Cer (d18:1(4E)) + UDP-alpha-D-galactose = a globoside GalGb4Cer (d18:1(4E)) + UDP + H(+). The protein operates within protein modification; protein glycosylation. In terms of biological role, catalyzes the transfer of Gal to GlcNAc-based acceptors with a preference for the core3 O-linked glycan GlcNAc(beta1,3)GalNAc structure. Can use glycolipid LC3Cer as an efficient acceptor. Also catalyzes the transfer of Gal to the terminal GalNAc unit of the globoside GB4, thereby synthesizing the glycolipid GB5, also known as the stage-specific embryonic antigen-3 (SSEA-3). The protein is Beta-1,3-galactosyltransferase 5 of Mus musculus (Mouse).